The following is a 174-amino-acid chain: Co-chaperone protein HscB (174 aa).

In terms of domain architecture, J spans 2–74; sequence DYFTLFGLPA…LKRAEYMLSL (73 aa).

It belongs to the HscB family. In terms of assembly, interacts with HscA and stimulates its ATPase activity. Interacts with IscU.

In terms of biological role, co-chaperone involved in the maturation of iron-sulfur cluster-containing proteins. Seems to help targeting proteins to be folded toward HscA. The chain is Co-chaperone protein HscB from Yersinia pestis bv. Antiqua (strain Antiqua).